The primary structure comprises 221 residues: Octanoyltransferase (221 aa).

One can recognise a BPL/LPL catalytic domain in the interval 29 to 208 (DEIPDTCLLL…RLTEFLLPAR (180 aa)). Substrate is bound by residues 67–74 (RGGRITWH), 138–140 (AIG), and 151–153 (GFA). Cys-169 serves as the catalytic Acyl-thioester intermediate.

This sequence belongs to the LipB family.

It localises to the cytoplasm. The catalysed reaction is octanoyl-[ACP] + L-lysyl-[protein] = N(6)-octanoyl-L-lysyl-[protein] + holo-[ACP] + H(+). It functions in the pathway protein modification; protein lipoylation via endogenous pathway; protein N(6)-(lipoyl)lysine from octanoyl-[acyl-carrier-protein]: step 1/2. Catalyzes the transfer of endogenously produced octanoic acid from octanoyl-acyl-carrier-protein onto the lipoyl domains of lipoate-dependent enzymes. Lipoyl-ACP can also act as a substrate although octanoyl-ACP is likely to be the physiological substrate. This Acidothermus cellulolyticus (strain ATCC 43068 / DSM 8971 / 11B) protein is Octanoyltransferase.